We begin with the raw amino-acid sequence, 436 residues long: Adenylosuccinate synthetase (436 aa).

GTP is bound by residues 13–19 and 41–43; these read GDEGKGK and GHT. Asp14 acts as the Proton acceptor in catalysis. Residues Asp14 and Gly41 each contribute to the Mg(2+) site. IMP contacts are provided by residues 14–17, 39–42, Thr131, Arg145, Gln226, Thr241, and Arg309; these read DEGK and NAGH. The active-site Proton donor is His42. 305–311 contributes to the substrate binding site; that stretch reads TVTGRKR. GTP is bound by residues Arg311, 337–339, and 419–421; these read KLD and STG.

It belongs to the adenylosuccinate synthetase family. As to quaternary structure, homodimer. Mg(2+) serves as cofactor.

The protein localises to the cytoplasm. The enzyme catalyses IMP + L-aspartate + GTP = N(6)-(1,2-dicarboxyethyl)-AMP + GDP + phosphate + 2 H(+). The protein operates within purine metabolism; AMP biosynthesis via de novo pathway; AMP from IMP: step 1/2. Functionally, plays an important role in the de novo pathway of purine nucleotide biosynthesis. Catalyzes the first committed step in the biosynthesis of AMP from IMP. The polypeptide is Adenylosuccinate synthetase (Aromatoleum aromaticum (strain DSM 19018 / LMG 30748 / EbN1) (Azoarcus sp. (strain EbN1))).